A 540-amino-acid chain; its full sequence is Berberine bridge enzyme-like 16 (540 aa).

The first 24 residues, 1 to 24 (MKFWSRPLTFLIIIIYLIIQQVNS), serve as a signal peptide directing secretion. Cys38 and Cys101 are oxidised to a cystine. An N-linked (GlcNAc...) asparagine glycan is attached at Asn59. The 176-residue stretch at 79-254 (STRKPEVIVA…LAWKIKLVRV (176 aa)) folds into the FAD-binding PCMH-type domain. The segment at residues 116–178 (HDYEGFSYTS…KVHAFPAGVC (63 aa)) is a cross-link (6-(S-cysteinyl)-8alpha-(pros-histidyl)-FAD (His-Cys)). Asn325 and Asn496 each carry an N-linked (GlcNAc...) asparagine glycan.

It belongs to the oxygen-dependent FAD-linked oxidoreductase family. Requires FAD as cofactor. In terms of processing, the FAD cofactor is bound via a bicovalent 6-S-cysteinyl, 8alpha-N1-histidyl FAD linkage.

Its subcellular location is the secreted. The protein localises to the cell wall. This is Berberine bridge enzyme-like 16 from Arabidopsis thaliana (Mouse-ear cress).